Here is a 1183-residue protein sequence, read N- to C-terminus: Formin-like protein (1183 aa).

2 disordered regions span residues M1–S44 and Q63–D82. Positions P23–H36 are enriched in basic residues. Polar residues predominate over residues Q63 to P79. Residues Q76–D559 form the GBD/FH3 domain. S225 carries the post-translational modification Phosphoserine. Positions L572 to D584 are enriched in polar residues. Residues L572–P681 form a disordered region. Composition is skewed to pro residues over residues L605–A614 and A622–F640. Positions S641–A654 are enriched in low complexity. One can recognise an FH2 domain in the interval I687 to N1088. In terms of domain architecture, DAD spans D1136–I1169.

It belongs to the formin homology family. As to quaternary structure, self-associates. Interacts (via GBD/FH3 domain) with Cdc42; the interaction is stronger with the GTP bound form of Cdc42.

Its function is as follows. Together with Cdc42, involved in establishment of planar cell polarity in the developing compound eye by contributing to ommatidial rotation. Together with DAAM and Cdc42, has a role in neuronal development of mushroom bodies. This Drosophila melanogaster (Fruit fly) protein is Formin-like protein.